A 1200-amino-acid polypeptide reads, in one-letter code: Nuclear envelope pore membrane protein POM 121 (1200 aa).

Residues 1–29 (MSPAAAAADGGERRRPPLGGREGRSRARG) are disordered. Residues 1 to 56 (MSPAAAAADGGERRRPPLGGREGRSRARGYGGPAGAAALGLALLGLALYLVPAAAA) are cisternal side. The span at 10-25 (GGERRRPPLGGREGRS) shows a compositional bias: basic and acidic residues. The helical transmembrane segment at 57-77 (LAWLAVGASAAWWGLSREPRG) threads the bilayer. Residues 76–1200 (RGPRALSSFV…QARRQHTRKK (1125 aa)) form a pore side region. A Phosphoserine modification is found at S83. 2 disordered regions span residues 91-167 (HPRP…SAVQ) and 177-196 (PTPLLRPSRRPPHRDCGPLS). A compositionally biased stretch (basic and acidic residues) spans 143–152 (LRQDPRERPG). A Phosphoserine modification is found at S244. Disordered stretches follow at residues 294 to 328 (KKKRTVAEEDQLHLDGQENKRRRHDSGGSGHSAFE), 345 to 509 (SLKR…ITAE), 530 to 627 (PDDA…SDSK), 640 to 692 (SITP…LATP), 706 to 744 (PATPKSESDSPLPSSSSAATTASSSTAPPTAASTTPTFK), 1075 to 1151 (TSGT…SSLS), and 1173 to 1200 (PSFSIGAGSKTPGARQRLQARRQHTRKK). A compositionally biased stretch (basic and acidic residues) spans 298–312 (TVAEEDQLHLDGQEN). 7 positions are modified to phosphoserine: S319, S322, S325, S345, S355, S367, and S370. Over residues 365-374 (TSSVSSLASA) the composition is skewed to low complexity. A compositionally biased stretch (polar residues) spans 379–397 (IPSSSRNAITSSYSSTRGI). Residues 404-419 (SGPTSSPFSSPASSRS) are compositionally biased toward low complexity. Phosphoserine is present on residues S408, S409, S412, S413, S416, and S417. Basic and acidic residues-rich tracts occupy residues 424–433 (RPAKKTREEE) and 446–456 (TDKESPGEKVT). Low complexity-rich tracts occupy residues 463-477 (QQSSWTSPPTPGSSG), 546-574 (PPFTFTLPAVGPAASPASLPAPSSNPLLE), 581-598 (ESPAPSSSEPAEAATVAA), and 605-621 (PSLLAPLVSPLAGPLAS). Over residues 640–657 (SITPLTDSKSSGVSQAEQ) the composition is skewed to polar residues. Composition is skewed to low complexity over residues 658 to 669 (SVSTPASTASSP), 681 to 692 (SPPASSSSLATP), 715 to 742 (SPLPSSSSAATTASSSTAPPTAASTTPT), and 1075 to 1099 (TSGTFSFGSGQSGTPGTTTSFGSLS). The span at 1100 to 1121 (QNTLGAPSQGSPFAFSVGSTPE) shows a compositional bias: polar residues. Residues 1190–1200 (LQARRQHTRKK) are compositionally biased toward basic residues.

This sequence belongs to the POM121 family. In terms of processing, proteolytically cleaved by caspase-3 during apoptosis.

It localises to the nucleus. The protein resides in the nuclear pore complex. The protein localises to the nucleus membrane. Its subcellular location is the endoplasmic reticulum membrane. Functionally, essential component of the nuclear pore complex (NPC). The repeat-containing domain may be involved in anchoring components of the pore complex to the pore membrane. When overexpressed in cells induces the formation of cytoplasmic annulate lamellae (AL). The polypeptide is Nuclear envelope pore membrane protein POM 121 (Pom121) (Mus musculus (Mouse)).